The following is a 637-amino-acid chain: Threonine--tRNA ligase (637 aa).

Positions 1-61 (MPNVKLPDGN…KEDCSLIIVT (61 aa)) constitute a TGS domain. The catalytic stretch occupies residues 242 to 533 (DHRKLGKALD…LIEHYAGKLP (292 aa)). Zn(2+) contacts are provided by cysteine 333, histidine 384, and histidine 510.

This sequence belongs to the class-II aminoacyl-tRNA synthetase family. As to quaternary structure, homodimer. Requires Zn(2+) as cofactor.

It localises to the cytoplasm. It catalyses the reaction tRNA(Thr) + L-threonine + ATP = L-threonyl-tRNA(Thr) + AMP + diphosphate + H(+). In terms of biological role, catalyzes the attachment of threonine to tRNA(Thr) in a two-step reaction: L-threonine is first activated by ATP to form Thr-AMP and then transferred to the acceptor end of tRNA(Thr). Also edits incorrectly charged L-seryl-tRNA(Thr). In Legionella pneumophila (strain Corby), this protein is Threonine--tRNA ligase.